Here is a 573-residue protein sequence, read N- to C-terminus: MSQNSSSLLETWRQVVEDLNALSQQQDSGIPPLTPTQRAYLNLAKPIALVDGYAVLSTPHALAKNAIEHDLGESLTKVLSMRMGRSFSLAVSVEPSRDGEDPNAPPAPRQQELNYPYPGQGPQSPQGQQGQQGQHPVQQEVRAHAPAPHQQGQHQAAQHQPPANQAPGQYVVGGERGQASQSAGAWEQTHSMPAFDQGFDPSPAPVEPPPQPAHPLRIPRETPAHNPNREVSLNPKYTFENFVIGPFNRFANAAAVAVAESPAKAFNPLFISGGSGLGKTHLLHAVGNYAQELQPGLRIKYVSSEEFTNDYINSVRDDRQESFKRRYRNLDILMVDDIQFLAGKEGTQEEFFHTFNALHQAEKQIILSSDRPPRQLTTLEDRLRTRFEGGLITDIQPPDLETRIAILMKKAQADGTHVDREVLELIASRFESSIRELEGALIRVSAYSSLINQPIDKEMAIVALRDILPEPEDMEITAPVIMEVTAEYFKISVDTLRGAGKTRAVAHARQLAMYLCRELTDMSLPKIGDVFGGKDHTTVMYADRKIRQEMTEKRDTYDEIQQLTQLIKSRGRN.

The domain I, interacts with DnaA modulators stretch occupies residues 1 to 85; that stretch reads MSQNSSSLLE…TKVLSMRMGR (85 aa). The tract at residues 85–231 is domain II; it reads RSFSLAVSVE…TPAHNPNREV (147 aa). Positions 91–232 are disordered; sequence VSVEPSRDGE…PAHNPNREVS (142 aa). Residues 116-169 are compositionally biased toward low complexity; the sequence is PYPGQGPQSPQGQQGQQGQHPVQQEVRAHAPAPHQQGQHQAAQHQPPANQAPGQ. Residues 178 to 191 are compositionally biased toward polar residues; that stretch reads QASQSAGAWEQTHS. Pro residues predominate over residues 202-213; the sequence is SPAPVEPPPQPA. The interval 232–448 is domain III, AAA+ region; sequence SLNPKYTFEN…GALIRVSAYS (217 aa). ATP-binding residues include Gly-276, Gly-278, Lys-279, and Thr-280. The domain IV, binds dsDNA stretch occupies residues 449–573; sequence SLINQPIDKE…TQLIKSRGRN (125 aa).

It belongs to the DnaA family. Oligomerizes as a right-handed, spiral filament on DNA at oriC.

The protein localises to the cytoplasm. Its function is as follows. Plays an essential role in the initiation and regulation of chromosomal replication. ATP-DnaA binds to the origin of replication (oriC) to initiate formation of the DNA replication initiation complex once per cell cycle. Binds the DnaA box (a 9 base pair repeat at the origin) and separates the double-stranded (ds)DNA. Forms a right-handed helical filament on oriC DNA; dsDNA binds to the exterior of the filament while single-stranded (ss)DNA is stabiized in the filament's interior. The ATP-DnaA-oriC complex binds and stabilizes one strand of the AT-rich DNA unwinding element (DUE), permitting loading of DNA polymerase. After initiation quickly degrades to an ADP-DnaA complex that is not apt for DNA replication. Binds acidic phospholipids. This Corynebacterium efficiens (strain DSM 44549 / YS-314 / AJ 12310 / JCM 11189 / NBRC 100395) protein is Chromosomal replication initiator protein DnaA.